The chain runs to 267 residues: Thiamine thiazole synthase (267 aa).

NAD(+) contacts are provided by residues serine 47, 66–67 (ER), glycine 74, valine 138, and 164–166 (HID). 2 residues coordinate Fe cation: aspartate 166 and histidine 181. Residues serine 184 and methionine 230 each contribute to the NAD(+) site. Arginine 240 is a binding site for glycine.

This sequence belongs to the THI4 family. As to quaternary structure, homooctamer; tetramer of dimers. It depends on Fe(2+) as a cofactor.

It carries out the reaction hydrogen sulfide + glycine + NAD(+) = ADP-5-ethyl-4-methylthiazole-2-carboxylate + nicotinamide + 3 H2O + H(+). It functions in the pathway cofactor biosynthesis; thiamine diphosphate biosynthesis. Its function is as follows. Involved in the biosynthesis of the thiazole moiety of thiamine. Catalyzes the conversion of NAD and glycine to adenosine diphosphate 5-(2-hydroxyethyl)-4-methylthiazole-2-carboxylate (ADT), an adenylated thiazole intermediate, using free sulfide as a source of sulfur. In Methanocaldococcus jannaschii (strain ATCC 43067 / DSM 2661 / JAL-1 / JCM 10045 / NBRC 100440) (Methanococcus jannaschii), this protein is Thiamine thiazole synthase.